A 563-amino-acid polypeptide reads, in one-letter code: MSEITLGRYLFERLKQVEVQTIFGLPGDFNLSLLDNIYEVPGMRWAGNANELNAAYAADGYARLKGMSCIITTFGVGELSALNGIAGSYAEHVGVLHVVGVPSVSSQAKQLLLHHTLGNGDFTVFHRMSSNISETTAMITDINTAPAEIDRCIRTTYVSQRPVYLGLPANLVDLTVPASLLDTPIDLSLKPNDPEAEEEVIENVLQLIKEAKNPVILADACCSRHDAKAETKKLIDLTQFPAFVTPMGKGSIDEKHPRFGGVYVGTLSSPAVKEAVESADLVLSVGALLSDFNTGSFSYSYKTKNIVEFHSDYTKIRSATFPGVQMKFALQKLLTKVADAAKGYKPVPVPSEPEHNEAVADSTPLKQEWVWTQVGEFLREGDVVITETGTSAFGINQTHFPNNTYGISQVLWGSIGFTTGATLGAAFAAEEIDPKKRVILFIGDGSLQLTVQEISTMIRWGLKPYLFVLNNDGYTIERLIHGETAQYNCIQNWQHLELLPTFGAKDYEAVRVSTTGEWNKLTTDEKFQDNTRIRLIEVMLPTMDAPSNLVKQAQLTAATNAKN.

The pyruvate site is built by Asp28 and His115. Residues Thr390 and 413-415 each bind thiamine diphosphate; that span reads GSI. Asp444 serves as a coordination point for Mg(2+). Thiamine diphosphate contacts are provided by residues 445–446 and 471–476; these read GS and NDGYTI. 2 residues coordinate Mg(2+): Asn471 and Gly473. Glu477 provides a ligand contact to pyruvate.

It belongs to the TPP enzyme family. In terms of assembly, homotetramer. Requires Mg(2+) as cofactor. The cofactor is thiamine diphosphate.

The catalysed reaction is a 2-oxocarboxylate + H(+) = an aldehyde + CO2. It catalyses the reaction pyruvate + H(+) = acetaldehyde + CO2. The sequence is that of Pyruvate decarboxylase (PDC1) from Kluyveromyces lactis (strain ATCC 8585 / CBS 2359 / DSM 70799 / NBRC 1267 / NRRL Y-1140 / WM37) (Yeast).